Consider the following 412-residue polypeptide: Candidapepsin-2 (412 aa).

A signal peptide (or 18, or 21) is located at residues 1 to 25; it reads MTTIAIFTKNVLLAIAFALFAQGAA. A propeptide spans 26 to 61 (activation peptide); the sequence is IPDPAKRDDNPGFVALDFEVTRKPLDVNATSELSKR. Asn-53 is a glycosylation site (N-linked (GlcNAc...) asparagine). Residues 75-383 form the Peptidase A1 domain; it reads YGIRVSVGSN…LDKETVLSRS (309 aa). The active site involves Asp-93. Cys-108 and Cys-113 form a disulfide bridge. Asp-273 is an active-site residue. An intrachain disulfide couples Cys-311 to Cys-345.

This sequence belongs to the peptidase A1 family. O-glycosylated.

It localises to the secreted. It catalyses the reaction Preferential cleavage at the carboxyl of hydrophobic amino acids, but fails to cleave 15-Leu-|-Tyr-16, 16-Tyr-|-Leu-17 and 24-Phe-|-Phe-25 of insulin B chain. Activates trypsinogen, and degrades keratin.. This Candida parapsilosis (Yeast) protein is Candidapepsin-2 (SAPP2).